A 252-amino-acid chain; its full sequence is GPI alpha-1,4-mannosyltransferase I, stabilizing subunit (252 aa).

A signal peptide spans 1–22 (MAASALAWLLLWAAGLVGRLAA). 2 N-linked (GlcNAc...) asparagine glycosylation sites follow: Asn-97 and Asn-209. A helical membrane pass occupies residues 225–245 (VCSVTLLITVLCSTLILLAVF).

This sequence belongs to the PIGX family. Part of the glycosylphosphatidylinositol-mannosyltransferase I complex that is composed of PIGM and PIGX. Interacts with PIGM; PIGX stabilizes PIGM.

The protein localises to the endoplasmic reticulum membrane. It functions in the pathway glycolipid biosynthesis; glycosylphosphatidylinositol-anchor biosynthesis. Stabilizing subunit of the glycosylphosphatidylinositol-mannosyltransferase I complex which catalyzes the transfer of the first mannose, via an alpha-1,4 bond from a dolichol-phosphate-mannose (Dol-P-Man) to the glucosaminyl acyl phosphatidylinositol (GlcN-(acyl)PI) intermediate to generate alpha-D-Man-(1-&gt;4)-alpha-D-GlcN-(1-&gt;6)-(1-radyl,2-acyl-sn-glycero-3-phospho)-2-acyl-inositol and participates in the sixth step of the glycosylphosphatidylinositol-anchor biosynthesis. Probably acts by stabilizing the mannosyltransferase PIGM. The polypeptide is GPI alpha-1,4-mannosyltransferase I, stabilizing subunit (Rattus norvegicus (Rat)).